A 100-amino-acid chain; its full sequence is UPF0235 protein NE0395 (100 aa).

This sequence belongs to the UPF0235 family.

The protein is UPF0235 protein NE0395 of Nitrosomonas europaea (strain ATCC 19718 / CIP 103999 / KCTC 2705 / NBRC 14298).